The sequence spans 431 residues: Glucose-1-phosphate adenylyltransferase (431 aa).

Lysine 39 serves as a coordination point for beta-D-fructose 1,6-bisphosphate. Positions 40, 46, and 52 each coordinate AMP. Residue tyrosine 114 coordinates alpha-D-glucose 1-phosphate. Arginine 130 contributes to the AMP binding site. Alpha-D-glucose 1-phosphate is bound by residues glycine 179, 194 to 195 (EK), and serine 212. Residues glutamate 370 and arginine 386 each contribute to the AMP site. Beta-D-fructose 1,6-bisphosphate contacts are provided by residues 419–423 (REMLR) and 429–431 (QER).

This sequence belongs to the bacterial/plant glucose-1-phosphate adenylyltransferase family. As to quaternary structure, homotetramer.

It carries out the reaction alpha-D-glucose 1-phosphate + ATP + H(+) = ADP-alpha-D-glucose + diphosphate. It participates in glycan biosynthesis; glycogen biosynthesis. Allosterically activated by fructose-1,6-bisphosphate (F16BP) and inhibited by AMP. Involved in the biosynthesis of ADP-glucose, a building block required for the elongation reactions to produce glycogen. Catalyzes the reaction between ATP and alpha-D-glucose 1-phosphate (G1P) to produce pyrophosphate and ADP-Glc. The sequence is that of Glucose-1-phosphate adenylyltransferase from Salmonella paratyphi A (strain ATCC 9150 / SARB42).